The chain runs to 244 residues: NAD-dependent protein deacylase SIR2rp3 (244 aa).

The Deacetylase sirtuin-type domain occupies 1 to 239; sequence MRRPNGMIAI…PAWADEVLHG (239 aa). Residue 13-32 coordinates NAD(+); it reads GAGISAESGISTFRDQNGLW. Tyr-57 and Arg-60 together coordinate substrate. Position 95–98 (95–98) interacts with NAD(+); sequence QNID. His-113 functions as the Proton acceptor in the catalytic mechanism. The Zn(2+) site is built by Cys-121 and Cys-141. NAD(+)-binding positions include 181 to 183 and Ala-225; that span reads GTS.

The protein belongs to the sirtuin family. Class III subfamily. Requires Zn(2+) as cofactor.

The protein localises to the mitochondrion. It carries out the reaction N(6)-malonyl-L-lysyl-[protein] + NAD(+) + H2O = 2''-O-malonyl-ADP-D-ribose + nicotinamide + L-lysyl-[protein]. It catalyses the reaction N(6)-succinyl-L-lysyl-[protein] + NAD(+) + H2O = 2''-O-succinyl-ADP-D-ribose + nicotinamide + L-lysyl-[protein]. The enzyme catalyses N(6)-glutaryl-L-lysyl-[protein] + NAD(+) + H2O = 2''-O-glutaryl-ADP-D-ribose + nicotinamide + L-lysyl-[protein]. In terms of biological role, NAD-dependent lysine demalonylase, desuccinylase and deglutarylase that specifically removes malonyl, succinyl and glutaryl groups on target proteins. Has weak NAD-dependent protein deacetylase activity; however this activity may not be physiologically relevant in vivo. The polypeptide is NAD-dependent protein deacylase SIR2rp3 (SIR2rp3) (Trypanosoma brucei brucei (strain 927/4 GUTat10.1)).